The following is a 328-amino-acid chain: Surface antigen CRP170 (328 aa).

2 consecutive repeats follow at residues 38–102 and 103–167; these read NAPC…CKKC.

The sequence is that of Surface antigen CRP170 from Giardia intestinalis (Giardia lamblia).